Reading from the N-terminus, the 366-residue chain is Growth hormone secretagogue receptor type 1 (366 aa).

Over 1–40 the chain is Extracellular; sequence MWNATPSEEPGFNLTLADLDWDASPGNDSLGDELLQLFPA. Asn13 and Asn27 each carry an N-linked (GlcNAc...) asparagine glycan. Residues 41 to 66 form a helical membrane-spanning segment; the sequence is PLLAGVTATCVALFVVGIAGNLLTML. Topologically, residues 67–72 are cytoplasmic; the sequence is VVSRFR. The helical transmembrane segment at 73–96 threads the bilayer; it reads ELRTTTNLYLSSMAFSDLLIFLCM. Topologically, residues 97–117 are extracellular; sequence PLDLVRLWQYRPWNFGDLLCK. An intrachain disulfide couples Cys116 to Cys198. The helical transmembrane segment at 118 to 139 threads the bilayer; sequence LFQFVSESCTYATVLTITALSV. Topologically, residues 140–162 are cytoplasmic; the sequence is ERYFAICFPLRAKVVVTKGRVKL. The helical transmembrane segment at 163 to 183 threads the bilayer; sequence VIFVIWAVAFCSAGPIFVLVG. Residues 184–211 lie on the Extracellular side of the membrane; the sequence is VEHENGTDPWDTNECRPTEFAVRSGLLT. A helical transmembrane segment spans residues 212-235; it reads VMVWVSSIFFFLPVFCLTVLYSLI. The Cytoplasmic segment spans residues 236-263; that stretch reads GRKLWRRRRGDAVVGASLRDQNHKQTVK. A helical transmembrane segment spans residues 264-285; the sequence is MLAVVVFAFILCWLPFHVGRYL. Residues 286 to 302 lie on the Extracellular side of the membrane; the sequence is FSKSFEPGSLEIAQISQ. A helical transmembrane segment spans residues 303 to 326; it reads YCNLVSFVLFYLSAAINPILYNIM. Over 327–366 the chain is Cytoplasmic; that stretch reads SKKYRVAVFRLLGFEPFSQRKLSTLKDESSRAWTESSINT.

This sequence belongs to the G-protein coupled receptor 1 family. As to expression, pituitary and hypothalamus.

The protein resides in the cell membrane. In terms of biological role, receptor for ghrelin, coupled to G-alpha-11 proteins. Stimulates growth hormone secretion. Also binds other growth hormone releasing peptides (GHRP) (e.g. Met-enkephalin and GHRP-6) as well as non-peptide, low molecular weight secretagogues (e.g. L-692,429, MK-0677, adenosine). This Homo sapiens (Human) protein is Growth hormone secretagogue receptor type 1 (GHSR).